Reading from the N-terminus, the 137-residue chain is Putative nucleoside diphosphate kinase (137 aa).

ATP-binding residues include Phe45, Arg73, Thr79, Arg90, and Asn100. The Pros-phosphohistidine intermediate role is filled by His103.

Belongs to the NDK family. It depends on Mg(2+) as a cofactor.

The catalysed reaction is a 2'-deoxyribonucleoside 5'-diphosphate + ATP = a 2'-deoxyribonucleoside 5'-triphosphate + ADP. It carries out the reaction a ribonucleoside 5'-diphosphate + ATP = a ribonucleoside 5'-triphosphate + ADP. Functionally, major role in the synthesis of nucleoside triphosphates other than ATP. The ATP gamma phosphate is transferred to the NDP beta phosphate via a ping-pong mechanism, using a phosphorylated active-site intermediate. The chain is Putative nucleoside diphosphate kinase (NME2P1) from Homo sapiens (Human).